Reading from the N-terminus, the 461-residue chain is PTS system sucrose-specific EIIBC component (461 aa).

Positions 4-87 constitute a PTS EIIB type-1 domain; the sequence is KETAKRLIEL…SKEADIEREE (84 aa). Cysteine 26 acts as the Phosphocysteine intermediate; for EIIB activity in catalysis. The 355-residue stretch at 107 to 461 folds into the PTS EIIC type-1 domain; that stretch reads KTLSNIFVPI…KINEDEERKK (355 aa). A run of 10 helical transmembrane segments spans residues 112–132, 148–168, 178–198, 208–228, 248–268, 289–309, 329–349, 359–379, 387–407, and 430–450; these read IFVPIIPAIVASGLLMGLLGM, LLDMFSSAAFIFLPILIGVSA, LGAVIGGIMIHPNLLNPWGLA, FGFDIALLGYQGTVIPVLLAV, LLVTPFVTVIVTGFVAFIAIG, AGFVAGLIFGGTYSLIVLTGV, LLPIWSMANVAQGGAGLAVFF, IALPAAFSAFLGITEPVIFGV, FIAAMIGGALGGAYVVFTHVA, and LIHYLIGMAIAAVSAFIAAFV.

The protein localises to the cell membrane. The enzyme catalyses N(pros)-phospho-L-histidyl-[protein](out) + sucrose = sucrose 6(G)-phosphate(in) + L-histidyl-[protein]. Functionally, the phosphoenolpyruvate-dependent sugar phosphotransferase system (sugar PTS), a major carbohydrate active transport system, catalyzes the phosphorylation of incoming sugar substrates concomitantly with their translocation across the cell membrane. This system is involved in sucrose transport. This chain is PTS system sucrose-specific EIIBC component (sacP), found in Bacillus subtilis (strain 168).